Consider the following 390-residue polypeptide: 1-deoxy-D-xylulose 5-phosphate reductoisomerase (390 aa).

NADPH contacts are provided by Thr10, Gly11, Ser12, Ile13, Gly36, Arg37, Asn38, and Asn121. Lys122 contributes to the 1-deoxy-D-xylulose 5-phosphate binding site. Glu123 contributes to the NADPH binding site. Asp147 contacts Mn(2+). The 1-deoxy-D-xylulose 5-phosphate site is built by Ser148, Glu149, Ser173, and His196. Glu149 contributes to the Mn(2+) binding site. Position 202 (Gly202) interacts with NADPH. Residues Ser209, Asn214, Lys215, and Glu218 each contribute to the 1-deoxy-D-xylulose 5-phosphate site. Position 218 (Glu218) interacts with Mn(2+). The disordered stretch occupies residues 367–390 (AASEHGRREAEKRVGARAHAPAGR). A compositionally biased stretch (basic and acidic residues) spans 370 to 380 (EHGRREAEKRV).

It belongs to the DXR family. The cofactor is Mg(2+). Requires Mn(2+) as cofactor.

The catalysed reaction is 2-C-methyl-D-erythritol 4-phosphate + NADP(+) = 1-deoxy-D-xylulose 5-phosphate + NADPH + H(+). The protein operates within isoprenoid biosynthesis; isopentenyl diphosphate biosynthesis via DXP pathway; isopentenyl diphosphate from 1-deoxy-D-xylulose 5-phosphate: step 1/6. Its function is as follows. Catalyzes the NADPH-dependent rearrangement and reduction of 1-deoxy-D-xylulose-5-phosphate (DXP) to 2-C-methyl-D-erythritol 4-phosphate (MEP). The polypeptide is 1-deoxy-D-xylulose 5-phosphate reductoisomerase (Anaeromyxobacter sp. (strain K)).